Consider the following 142-residue polypeptide: Hemoglobin subunit alpha (142 aa).

The 141-residue stretch at 2-142 folds into the Globin domain; the sequence is VLSATDKSNV…VSTVLTSKYR (141 aa). Serine 4 bears the Phosphoserine mark. N6-succinyllysine is present on residues lysine 8 and lysine 12. Lysine 17 is subject to N6-acetyllysine; alternate. Residue lysine 17 is modified to N6-succinyllysine; alternate. Tyrosine 25 bears the Phosphotyrosine mark. Residue serine 36 is modified to Phosphoserine. Lysine 41 is subject to N6-succinyllysine. Serine 50 is modified (phosphoserine). Residue histidine 59 participates in O2 binding. Histidine 88 serves as a coordination point for heme b. Phosphoserine is present on serine 103. Threonine 109 is modified (phosphothreonine). Serine 125 bears the Phosphoserine mark. 2 positions are modified to phosphothreonine: threonine 135 and threonine 138. Phosphoserine is present on serine 139.

The protein belongs to the globin family. In terms of assembly, heterotetramer of two alpha chains and two beta chains. In terms of tissue distribution, red blood cells.

Its function is as follows. Involved in oxygen transport from the lung to the various peripheral tissues. Functionally, hemopressin acts as an antagonist peptide of the cannabinoid receptor CNR1. Hemopressin-binding efficiently blocks cannabinoid receptor CNR1 and subsequent signaling. The chain is Hemoglobin subunit alpha (HBA) from Alces alces alces (European moose).